A 1835-amino-acid chain; its full sequence is AT-rich interactive domain-containing protein 2 (1835 aa).

An N-acetylalanine modification is found at A2. Position 4 is a phosphoserine (S4). Residues K7, K15, and K119 each participate in a glycyl lysine isopeptide (Lys-Gly) (interchain with G-Cter in SUMO2) cross-link. One can recognise an ARID domain in the interval R13–H105. An LXXLL motif is present at residues L313–L317. The RFX-type winged-helix DNA-binding region spans A524–A603. Residue K555 forms a Glycyl lysine isopeptide (Lys-Gly) (interchain with G-Cter in SUMO2) linkage. Phosphoserine occurs at positions 631 and 635. Phosphothreonine is present on T653. S689 carries the phosphoserine modification. T692 carries the phosphothreonine modification. Disordered stretches follow at residues Q819–D844, L962–S1057, M1266–E1287, N1295–S1314, and L1321–S1341. Low complexity-rich tracts occupy residues T823 to Q843, P985 to S996, and Q1025 to Q1044. The residue at position 1300 (S1300) is a Phosphoserine. Over residues D1301–S1314 the composition is skewed to polar residues. A phosphoserine mark is found at S1391 and S1496. Disordered stretches follow at residues D1488 to T1522 and S1572 to G1629. The span at S1491–T1509 shows a compositional bias: polar residues. The segment covering K1513 to T1522 has biased composition (basic and acidic residues). Residues A1573–N1592 are compositionally biased toward polar residues. Residues Q1602–D1623 show a composition bias toward low complexity. The segment at F1632–H1657 adopts a C2H2-type zinc-finger fold. Residues K1701, K1716, and K1731 each participate in a glycyl lysine isopeptide (Lys-Gly) (interchain with G-Cter in SUMO2) cross-link. The tract at residues D1703–R1728 is disordered. The span at A1708–R1728 shows a compositional bias: polar residues.

Component of the SWI/SNF-B (PBAF) chromatin remodeling complex, at least composed of SMARCA4/BRG1, SMARCB1/BAF47/SNF5, ACTL6A/BAF53A or ACTL6B/BAF53B, SMARCE1/BAF57, SMARCD1/BAF60A, SMARCD2/BAF60B, perhaps SMARCD3/BAF60C, SMARCC1/BAF155, SMARCC2/BAF170, PBRM1/BAF180, ARID2/BAF200 and actin. Interacts with SRF. Forms complexes with SRF and SRF cofactors MYOCD, NKX2-5 and SRFBP1. As to expression, highly expressed in heart.

It localises to the nucleus. Functionally, involved in transcriptional activation and repression of select genes by chromatin remodeling (alteration of DNA-nucleosome topology). Required for the stability of the SWI/SNF chromatin remodeling complex SWI/SNF-B (PBAF). May be involved in targeting the complex to different genes. May be involved in regulating transcriptional activation of cardiac genes. In Homo sapiens (Human), this protein is AT-rich interactive domain-containing protein 2.